We begin with the raw amino-acid sequence, 409 residues long: Lactadherin (409 aa).

2 consecutive EGF-like domains span residues 2-41 (SGDF…LICN) and 44-88 (EKGP…IHCE). Intrachain disulfides connect cysteine 6-cysteine 17, cysteine 11-cysteine 29, and cysteine 31-cysteine 40. Asparagine 41 carries N-linked (GlcNAc...) asparagine glycosylation. 6 disulfides stabilise this stretch: cysteine 48/cysteine 59, cysteine 53/cysteine 76, cysteine 78/cysteine 87, cysteine 91/cysteine 247, cysteine 234/cysteine 238, and cysteine 252/cysteine 409. The short motif at 67 to 69 (RGD) is the Cell attachment site element. 2 F5/8 type C domains span residues 91 to 247 (CNAP…LLGC) and 252 to 409 (CAEP…LLGC). Asparagine 372 carries N-linked (GlcNAc...) asparagine glycosylation.

In terms of tissue distribution, mammary epithelial cell surfaces and spermatozoan. Also present in testis, epididymis, uterus, adrenal gland, tonsil, muscle, heart, lymphatic gland, thymus and kidney but not spleen, liver, lung or brain.

The protein resides in the membrane. It localises to the secreted. Its subcellular location is the cytoplasmic vesicle. The protein localises to the secretory vesicle. It is found in the acrosome membrane. Functionally, contributes to phagocytic removal of apoptotic cells in many tissues. Plays an important role in the maintenance of intestinal epithelial homeostasis and the promotion of mucosal healing. Promotes VEGF-dependent neovascularization. Specific ligand for the alpha-v/beta-3 and alpha-v/beta-5 receptors. Also binds to phosphatidylserine-enriched cell surfaces in a receptor-independent manner. Zona pellucida-binding protein which may play a role in gamete interaction. The protein is Lactadherin (MFGE8) of Sus scrofa (Pig).